We begin with the raw amino-acid sequence, 344 residues long: FCS-Like Zinc finger 10 (344 aa).

The FLZ-type zinc finger occupies 270–314; the sequence is DFLSFCYGCSKKLGMGEDIYMYSGYKAFCSSECRSKEIDLDEEME. Over residues 309–320 the composition is skewed to acidic residues; it reads LDEEMEDGDEEE. Positions 309-344 are disordered; sequence LDEEMEDGDEEEAIKSVSSSDKESKKKSNGVFFTVG.

Belongs to the FLZ family. As to quaternary structure, interacts with KIN10 and KIN11 via its FLZ-type zinc finger domain. Interacts with KINB1, KINB2 and KINB3 via its N-terminal part. Forms homodimer and heterodimer with FLZ2 and FLZ12 in vitro. Early expressed in hypocotyl and cotyledon and preferentially in the stelar region of the shoot and root. Later expressed in root-shoot junction, lateral root, old or senescing leaves and in pistil and pollen of flower buds or open flowers.

Its subcellular location is the cytoplasm. It is found in the nucleus. The protein localises to the endoplasmic reticulum. Functionally, may act as an adapter to facilitate the interaction of SnRK1 complex with effector proteins, conferring tissue- and stimulus-type specific differences in the SnRK1 regulation pathway. Negatively regulates KIN10 leading to a repression of the SnRK1 signaling pathway. The chain is FCS-Like Zinc finger 10 from Arabidopsis thaliana (Mouse-ear cress).